Reading from the N-terminus, the 295-residue chain is MPYQQITVNVNDAVAERLADALMEHGALSAAIEDAYAGTQNEQAIFGEPGMPAEQIWQQSKVIALFGEHDEAAAIIQTAAQECGLKDLAYTGEILEDQDWVRLTQAQFDPIRISERLWITPSWHEAPEDTAVNLRLDPGLAFGTGSHPTTRLCLKWLDTQLKNGESVLDYGCGSGILTIAALKLGAGFAVGVDIDEQAVRAGKDNAEQNNVDAQFFLPDGLPQGQFDVVVANILANPLRMLGEMLAARTKQGGRIVLSGLLDEQAEELGGIYSQWFDLDPAETEEGWARLSGTKR.

S-adenosyl-L-methionine is bound by residues T150, G171, D193, and N232.

This sequence belongs to the methyltransferase superfamily. PrmA family.

It is found in the cytoplasm. It carries out the reaction L-lysyl-[protein] + 3 S-adenosyl-L-methionine = N(6),N(6),N(6)-trimethyl-L-lysyl-[protein] + 3 S-adenosyl-L-homocysteine + 3 H(+). Its function is as follows. Methylates ribosomal protein L11. The chain is Ribosomal protein L11 methyltransferase from Neisseria meningitidis serogroup A / serotype 4A (strain DSM 15465 / Z2491).